Reading from the N-terminus, the 65-residue chain is Toxin KTx8 (65 aa).

The signal sequence occupies residues 1–25 (MNKVCFVVVLVLFVALAAYVSPIEG). Disulfide bonds link Cys31/Cys53, Cys38/Cys61, and Cys42/Cys63.

It belongs to the short scorpion toxin superfamily. Potassium channel inhibitor family. Alpha-KTx 11 subfamily. In terms of tissue distribution, expressed by the venom gland.

Its subcellular location is the secreted. In terms of biological role, this recombinant toxin inhibits the mammalian voltage-gated potassium channels Kv1.3/KCNA3 in vitro with an IC(50) of 26.40 nM. The chain is Toxin KTx8 from Lychas mucronatus (Chinese swimming scorpion).